The chain runs to 287 residues: Small ribosomal subunit biogenesis GTPase RsgA (287 aa).

Residues serine 61–leucine 218 form the CP-type G domain. GTP-binding positions include asparagine 110–aspartate 113 and glycine 161–threonine 169. 4 residues coordinate Zn(2+): cysteine 242, cysteine 247, histidine 249, and cysteine 255.

It belongs to the TRAFAC class YlqF/YawG GTPase family. RsgA subfamily. Monomer. Associates with 30S ribosomal subunit, binds 16S rRNA. The cofactor is Zn(2+).

The protein localises to the cytoplasm. Functionally, one of several proteins that assist in the late maturation steps of the functional core of the 30S ribosomal subunit. Helps release RbfA from mature subunits. May play a role in the assembly of ribosomal proteins into the subunit. Circularly permuted GTPase that catalyzes slow GTP hydrolysis, GTPase activity is stimulated by the 30S ribosomal subunit. This is Small ribosomal subunit biogenesis GTPase RsgA from Clostridium perfringens (strain 13 / Type A).